The chain runs to 325 residues: Interferon regulatory factor 1 (325 aa).

The IRF tryptophan pentad repeat DNA-binding region spans 5 to 113 (RMRMRPWLEM…SAVRVYRMLP (109 aa)). Lysine 78 carries the post-translational modification N6-acetyllysine. Residues 92-165 (EEVKDQSRNK…TLPDDHSSYT (74 aa)) are disordered. The span at 141-157 (GDSSPDTFSDGLSSSTL) shows a compositional bias: polar residues. Residues lysine 275 and lysine 299 each participate in a glycyl lysine isopeptide (Lys-Gly) (interchain with G-Cter in SUMO) cross-link.

The protein belongs to the IRF family. Monomer. Homodimer. Interacts with EP300. Interacts with MYD88. Interacts with PIAS3. Interacts with SPOP. Phosphorylated by CK2 and this positively regulates its activity. Post-translationally, sumoylation represses the transcriptional activity and displays enhanced resistance to protein degradation. Sumoylated by UBE2I/UBC9 and SUMO1. Inactivates the tumor suppressor activity. Elevated levels in tumor cells. Major site is Lys-275. Sumoylation is enhanced by PIAS3. Desumoylated by SENP1 in tumor cells and appears to compete with ubiquitination on C-terminal sites. In terms of processing, ubiquitinated in a SPOP-depedent manner. Appears to compete with sumoylation on C-terminal sites.

The protein resides in the nucleus. The protein localises to the cytoplasm. Activated by MYD88. Transcriptional regulator which displays a remarkable functional diversity in the regulation of cellular responses. Regulates transcription of IFN and IFN-inducible genes, host response to viral and bacterial infections, regulation of many genes expressed during hematopoiesis, inflammation, immune responses and cell proliferation and differentiation, regulation of the cell cycle and induction of growth arrest and programmed cell death following DNA damage. Stimulates both innate and acquired immune responses through the activation of specific target genes and can act as a transcriptional activator and repressor regulating target genes by binding to an interferon-stimulated response element (ISRE) in their promoters. Has an essentail role in IFNG-dependent immunity to mycobacteria. Competes with the transcriptional repressor ZBED2 for binding to a common consensus sequence in gene promoters. Its target genes for transcriptional activation activity include: genes involved in anti-viral response, such as IFN-alpha/beta, RIGI, TNFSF10/TRAIL, ZBP1, OAS1/2, PIAS1/GBP, EIF2AK2/PKR and RSAD2/viperin; antibacterial response, such as GBP2, GBP5 and NOS2/INOS; anti-proliferative response, such as p53/TP53, LOX and CDKN1A; apoptosis, such as BBC3/PUMA, CASP1, CASP7 and CASP8; immune response, such as IL7, IL12A/B and IL15, PTGS2/COX2 and CYBB; DNA damage responses and DNA repair, such as POLQ/POLH; MHC class I expression, such as TAP1, PSMB9/LMP2, PSME1/PA28A, PSME2/PA28B and B2M and MHC class II expression, such as CIITA; metabolic enzymes, such as ACOD1/IRG1. Represses genes involved in anti-proliferative response, such as BIRC5/survivin, CCNB1, CCNE1, CDK1, CDK2 and CDK4 and in immune response, such as FOXP3, IL4, ANXA2 and TLR4. Stimulates p53/TP53-dependent transcription through enhanced recruitment of EP300 leading to increased acetylation of p53/TP53. Plays an important role in immune response directly affecting NK maturation and activity, macrophage production of IL12, Th1 development and maturation of CD8+ T-cells. Also implicated in the differentiation and maturation of dendritic cells and in the suppression of regulatory T (Treg) cells development. Acts as a tumor suppressor and plays a role not only in antagonism of tumor cell growth but also in stimulating an immune response against tumor cells. The protein is Interferon regulatory factor 1 (IRF1) of Homo sapiens (Human).